A 1413-amino-acid polypeptide reads, in one-letter code: DNA-directed RNA polymerase subunit beta' (1413 aa).

Zn(2+)-binding residues include Cys-70, Cys-72, Cys-85, and Cys-88. The Mg(2+) site is built by Asp-460, Asp-462, and Asp-464. Residues Cys-819, Cys-893, Cys-900, and Cys-903 each contribute to the Zn(2+) site. The tract at residues 1392–1413 is disordered; the sequence is EEAFDFGTPSAPAEEPQHPAAE.

It belongs to the RNA polymerase beta' chain family. The RNAP catalytic core consists of 2 alpha, 1 beta, 1 beta' and 1 omega subunit. When a sigma factor is associated with the core the holoenzyme is formed, which can initiate transcription. The cofactor is Mg(2+). Zn(2+) serves as cofactor.

The enzyme catalyses RNA(n) + a ribonucleoside 5'-triphosphate = RNA(n+1) + diphosphate. In terms of biological role, DNA-dependent RNA polymerase catalyzes the transcription of DNA into RNA using the four ribonucleoside triphosphates as substrates. The sequence is that of DNA-directed RNA polymerase subunit beta' from Burkholderia cenocepacia (strain ATCC BAA-245 / DSM 16553 / LMG 16656 / NCTC 13227 / J2315 / CF5610) (Burkholderia cepacia (strain J2315)).